A 695-amino-acid chain; its full sequence is Elongation factor G (695 aa).

A tr-type G domain is found at Ala-10 to Ile-285. Residues Ala-19–Thr-26, Asp-83–His-87, and Asn-137–Asp-140 contribute to the GTP site.

This sequence belongs to the TRAFAC class translation factor GTPase superfamily. Classic translation factor GTPase family. EF-G/EF-2 subfamily.

It is found in the cytoplasm. Its function is as follows. Catalyzes the GTP-dependent ribosomal translocation step during translation elongation. During this step, the ribosome changes from the pre-translocational (PRE) to the post-translocational (POST) state as the newly formed A-site-bound peptidyl-tRNA and P-site-bound deacylated tRNA move to the P and E sites, respectively. Catalyzes the coordinated movement of the two tRNA molecules, the mRNA and conformational changes in the ribosome. The sequence is that of Elongation factor G from Limosilactobacillus reuteri (strain DSM 20016) (Lactobacillus reuteri).